The primary structure comprises 393 residues: NAD(P)H-quinone oxidoreductase subunit H, chloroplastic (393 aa).

It belongs to the complex I 49 kDa subunit family. In terms of assembly, NDH is composed of at least 16 different subunits, 5 of which are encoded in the nucleus.

The protein localises to the plastid. It is found in the chloroplast thylakoid membrane. It carries out the reaction a plastoquinone + NADH + (n+1) H(+)(in) = a plastoquinol + NAD(+) + n H(+)(out). It catalyses the reaction a plastoquinone + NADPH + (n+1) H(+)(in) = a plastoquinol + NADP(+) + n H(+)(out). Functionally, NDH shuttles electrons from NAD(P)H:plastoquinone, via FMN and iron-sulfur (Fe-S) centers, to quinones in the photosynthetic chain and possibly in a chloroplast respiratory chain. The immediate electron acceptor for the enzyme in this species is believed to be plastoquinone. Couples the redox reaction to proton translocation, and thus conserves the redox energy in a proton gradient. In Acorus calamus var. americanus (American sweet flag), this protein is NAD(P)H-quinone oxidoreductase subunit H, chloroplastic.